We begin with the raw amino-acid sequence, 204 residues long: Phosphopantothenoylcysteine decarboxylase (204 aa).

FMN contacts are provided by residues F59 and 104-107 (DANT). N140 is a binding site for substrate. The active-site Proton donor is C173.

This sequence belongs to the HFCD (homooligomeric flavin containing Cys decarboxylase) superfamily. Homotrimer. Requires FMN as cofactor.

It catalyses the reaction N-[(R)-4-phosphopantothenoyl]-L-cysteine + H(+) = (R)-4'-phosphopantetheine + CO2. It functions in the pathway cofactor biosynthesis; coenzyme A biosynthesis; CoA from (R)-pantothenate: step 3/5. Catalyzes the decarboxylation of the cysteine moiety of 4-phosphopantothenoylcysteine to form 4'-phosphopantotheine and this reaction forms part of the biosynthesis of coenzyme A. The protein is Phosphopantothenoylcysteine decarboxylase (PPCDC) of Homo sapiens (Human).